Reading from the N-terminus, the 199-residue chain is dITP/XTP pyrophosphatase (199 aa).

Substrate is bound at residue 8–13; sequence SGNAGK. Residue aspartate 69 is the Proton acceptor of the active site. Residue aspartate 69 participates in Mg(2+) binding. Residues serine 70, 154–157, lysine 177, and 182–183 each bind substrate; these read FGYN and HR.

This sequence belongs to the HAM1 NTPase family. Homodimer. The cofactor is Mg(2+).

It catalyses the reaction XTP + H2O = XMP + diphosphate + H(+). The enzyme catalyses dITP + H2O = dIMP + diphosphate + H(+). It carries out the reaction ITP + H2O = IMP + diphosphate + H(+). Its function is as follows. Pyrophosphatase that catalyzes the hydrolysis of nucleoside triphosphates to their monophosphate derivatives, with a high preference for the non-canonical purine nucleotides XTP (xanthosine triphosphate), dITP (deoxyinosine triphosphate) and ITP. Seems to function as a house-cleaning enzyme that removes non-canonical purine nucleotides from the nucleotide pool, thus preventing their incorporation into DNA/RNA and avoiding chromosomal lesions. The polypeptide is dITP/XTP pyrophosphatase (Xanthomonas campestris pv. campestris (strain 8004)).